A 202-amino-acid polypeptide reads, in one-letter code: Protein-methionine-sulfoxide reductase heme-binding subunit MsrQ (202 aa).

6 helical membrane-spanning segments follow: residues 8–28, 42–62, 75–95, 110–130, 147–167, and 169–189; these read LAVF…AWIF, LGLG…LQKL, LGLW…VFIL, PYII…ITSN, LVYL…RADL, and EWTL…PSIA.

This sequence belongs to the MsrQ family. In terms of assembly, heterodimer of a catalytic subunit (MsrP) and a heme-binding subunit (MsrQ). FMN serves as cofactor. Requires heme b as cofactor.

The protein resides in the cell inner membrane. In terms of biological role, part of the MsrPQ system that repairs oxidized periplasmic proteins containing methionine sulfoxide residues (Met-O), using respiratory chain electrons. Thus protects these proteins from oxidative-stress damage caused by reactive species of oxygen and chlorine generated by the host defense mechanisms. MsrPQ is essential for the maintenance of envelope integrity under bleach stress, rescuing a wide series of structurally unrelated periplasmic proteins from methionine oxidation. MsrQ provides electrons for reduction to the reductase catalytic subunit MsrP, using the quinone pool of the respiratory chain. This Pseudomonas aeruginosa (strain LESB58) protein is Protein-methionine-sulfoxide reductase heme-binding subunit MsrQ.